A 286-amino-acid chain; its full sequence is MKIDGYTRMAAVVANPIKHSLSPFIHNLAFDLTDENGVYLAWEVESKKLAAIVENVRNLDMYGLNISMPYKGEIIKFMDELSPAAELIGAVNTVVNHSGKLIGHNTDGIGFFNSLKKYDFKIENKQILVLGGGGAAIALIAQAALSGAKKIVVAARKSASYDPLNEKLAKLSAKTGVEILLTDLSGADRLQKELNQTDLLVNATSVGMDGASFPLEKSLLLPDKLLVVDAIYKVRETPFLHWAKEQGAQTENGLGMLIGQAAESFYLWTGKEMPVDKITLEMEREV.

Residues 20–22 (SLS) and Ser67 each bind shikimate. The active-site Proton acceptor is the Lys71. Residues Asn92 and Asp107 each coordinate shikimate. Residues 131–135 (GGGGA) and Ala230 contribute to the NADP(+) site. Tyr232 contributes to the shikimate binding site. NADP(+) is bound at residue Gly253.

It belongs to the shikimate dehydrogenase family. As to quaternary structure, homodimer.

It carries out the reaction shikimate + NADP(+) = 3-dehydroshikimate + NADPH + H(+). It participates in metabolic intermediate biosynthesis; chorismate biosynthesis; chorismate from D-erythrose 4-phosphate and phosphoenolpyruvate: step 4/7. In terms of biological role, involved in the biosynthesis of the chorismate, which leads to the biosynthesis of aromatic amino acids. Catalyzes the reversible NADPH linked reduction of 3-dehydroshikimate (DHSA) to yield shikimate (SA). In Lactococcus lactis subsp. cremoris (strain MG1363), this protein is Shikimate dehydrogenase (NADP(+)).